The sequence spans 289 residues: Rhodopsin (289 aa).

Topologically, residues 1–7 (YLVSPAA) are extracellular. The chain crosses the membrane as a helical span at residues 8-32 (YAALGAYMFLLILIGFPVNFLTLYV). The Cytoplasmic segment spans residues 33-44 (TLEHKKLRTPLN). Residues 45-67 (YILLNLAVADLFMVLGGFTTTMY) traverse the membrane as a helical segment. The Extracellular segment spans residues 68–81 (TSMHGYFVLGRLGC). Cysteines 81 and 158 form a disulfide. A helical transmembrane segment spans residues 82 to 104 (NLEGFFATLGGEIALWSLVVLAI). The 'Ionic lock' involved in activated form stabilization motif lies at 105-107 (ERW). At 105-123 (ERWIVVCKPISKFRFTEDN) the chain is on the cytoplasmic side. A helical membrane pass occupies residues 124–144 (AIMGLAFSWVMALACAVPPLV). Over 145 to 173 (GWLRYIPEGMQCTCGVDYYTRAEGFDNES) the chain is Extracellular. Residue Asn-171 is glycosylated (N-linked (GlcNAc...) asparagine). Residues 174-195 (FVIYMFIVHFLIPLSVIFFCYG) form a helical membrane-spanning segment. Over 196–223 (RLLCAVKEAAAAQQESETTQRAEKEVSR) the chain is Cytoplasmic. A helical membrane pass occupies residues 224-245 (MVVIMVIGFLVCWLPYASVAWW). Residues 246-257 (IFCNQGSDFGPI) are Extracellular-facing. The helical transmembrane segment at 258 to 279 (FMTLPSFFAKRPAIYNPMIYIC) threads the bilayer. Lys-267 carries the N6-(retinylidene)lysine modification. Residues 280-289 (MNKQFRHCMI) are Cytoplasmic-facing.

The protein belongs to the G-protein coupled receptor 1 family. Opsin subfamily. Phosphorylated on some or all of the serine and threonine residues present in the C-terminal region. In terms of processing, contains one covalently linked retinal chromophore.

The protein resides in the membrane. The protein localises to the cell projection. It localises to the cilium. Its subcellular location is the photoreceptor outer segment. Photoreceptor required for image-forming vision at low light intensity. While most salt water fish species use retinal as chromophore, most freshwater fish use 3-dehydroretinal, or a mixture of retinal and 3-dehydroretinal. Light-induced isomerization of 11-cis to all-trans retinal triggers a conformational change that activates signaling via G-proteins. Subsequent receptor phosphorylation mediates displacement of the bound G-protein alpha subunit by arrestin and terminates signaling. The chain is Rhodopsin (rho) from Batrachocottus nikolskii (Fat sculpin).